The sequence spans 406 residues: Probable tRNA pseudouridine synthase D (406 aa).

Asp-77 acts as the Nucleophile in catalysis. The TRUD domain occupies 150–371; it reads GFPNYFGIQR…PGGRRELLIK (222 aa).

Belongs to the pseudouridine synthase TruD family.

It carries out the reaction uridine(13) in tRNA = pseudouridine(13) in tRNA. Functionally, could be responsible for synthesis of pseudouridine from uracil-13 in transfer RNAs. In Pyrococcus abyssi (strain GE5 / Orsay), this protein is Probable tRNA pseudouridine synthase D.